The following is a 309-amino-acid chain: Glutaminase (309 aa).

7 residues coordinate substrate: Ser-64, Asn-114, Glu-160, Asn-167, Tyr-191, Tyr-243, and Val-261.

This sequence belongs to the glutaminase family. As to quaternary structure, homotetramer.

The catalysed reaction is L-glutamine + H2O = L-glutamate + NH4(+). This Methylorubrum extorquens (strain PA1) (Methylobacterium extorquens) protein is Glutaminase.